We begin with the raw amino-acid sequence, 541 residues long: 2-isopropylmalate synthase (541 aa).

The region spanning 8-284 is the Pyruvate carboxyltransferase domain; the sequence is VIIFDTTLRD…LTNINTRHIY (277 aa). Residues Asp17, His208, His210, and Asn244 each contribute to the Mn(2+) site. The regulatory domain stretch occupies residues 408-541; it reads RLELVQVSCG…DQPTEVVAGS (134 aa).

Belongs to the alpha-IPM synthase/homocitrate synthase family. LeuA type 1 subfamily. As to quaternary structure, homodimer. Mn(2+) serves as cofactor.

Its subcellular location is the cytoplasm. It carries out the reaction 3-methyl-2-oxobutanoate + acetyl-CoA + H2O = (2S)-2-isopropylmalate + CoA + H(+). Its pathway is amino-acid biosynthesis; L-leucine biosynthesis; L-leucine from 3-methyl-2-oxobutanoate: step 1/4. Functionally, catalyzes the condensation of the acetyl group of acetyl-CoA with 3-methyl-2-oxobutanoate (2-ketoisovalerate) to form 3-carboxy-3-hydroxy-4-methylpentanoate (2-isopropylmalate). The polypeptide is 2-isopropylmalate synthase (Trichodesmium erythraeum (strain IMS101)).